A 377-amino-acid chain; its full sequence is N-acetyldiaminopimelate deacetylase (377 aa).

Residue D70 is part of the active site. The Proton acceptor role is filled by E129.

It belongs to the peptidase M20A family. N-acetyldiaminopimelate deacetylase subfamily.

It carries out the reaction N-acetyl-(2S,6S)-2,6-diaminopimelate + H2O = (2S,6S)-2,6-diaminopimelate + acetate. It functions in the pathway amino-acid biosynthesis; L-lysine biosynthesis via DAP pathway; LL-2,6-diaminopimelate from (S)-tetrahydrodipicolinate (acetylase route): step 3/3. Catalyzes the conversion of N-acetyl-diaminopimelate to diaminopimelate and acetate. This chain is N-acetyldiaminopimelate deacetylase, found in Streptococcus thermophilus (strain ATCC BAA-491 / LMD-9).